The sequence spans 165 residues: uncharacterized protein (165 aa).

This is an uncharacterized protein from Escherichia coli (strain K12).